A 254-amino-acid polypeptide reads, in one-letter code: Translation initiation factor 2 subunit alpha (254 aa).

In terms of domain architecture, S1 motif spans 10-81 (GDLVVVKITE…ERKVVDLSLK (72 aa)).

The protein belongs to the eIF-2-alpha family. Heterotrimer composed of an alpha, a beta and a gamma chain.

In terms of biological role, eIF-2 functions in the early steps of protein synthesis by forming a ternary complex with GTP and initiator tRNA. The polypeptide is Translation initiation factor 2 subunit alpha (Thermoplasma acidophilum (strain ATCC 25905 / DSM 1728 / JCM 9062 / NBRC 15155 / AMRC-C165)).